A 451-amino-acid chain; its full sequence is 23S rRNA (uracil(1939)-C(5))-methyltransferase RlmD (451 aa).

The interval 1-21 (MAKHERGLRFQPTGGVKSVQI) is disordered. Residues 20-78 (QIPAGKKQRLSIERLSDDGRGIAFLEGKTWFVAGSLAGEEVEARVLNARGKVVEARTER) form the TRAM domain. Residues Cys-91, Cys-97, Cys-100, and Cys-179 each coordinate [4Fe-4S] cluster. S-adenosyl-L-methionine contacts are provided by Gln-283, Phe-312, Asn-317, Glu-333, Asp-360, and Asp-381. Cys-407 functions as the Nucleophile in the catalytic mechanism.

The protein belongs to the class I-like SAM-binding methyltransferase superfamily. RNA M5U methyltransferase family. RlmD subfamily.

It catalyses the reaction uridine(1939) in 23S rRNA + S-adenosyl-L-methionine = 5-methyluridine(1939) in 23S rRNA + S-adenosyl-L-homocysteine + H(+). Catalyzes the formation of 5-methyl-uridine at position 1939 (m5U1939) in 23S rRNA. This chain is 23S rRNA (uracil(1939)-C(5))-methyltransferase RlmD, found in Pseudomonas syringae pv. tomato (strain ATCC BAA-871 / DC3000).